The chain runs to 126 residues: Protein ApaG (126 aa).

The ApaG domain maps to 2 to 126; sequence SALDDSIRVE…FRLALPGLLH (125 aa).

In Shewanella sp. (strain ANA-3), this protein is Protein ApaG.